We begin with the raw amino-acid sequence, 1551 residues long: Transient receptor potential cation channel subfamily M member-like 2 (1551 aa).

Residues 1 to 714 lie on the Cytoplasmic side of the membrane; the sequence is MGKDSFTPLY…WMGTMAMNTR (714 aa). An intramembrane segment occupies 715-730; it reads WWKVLVCLYLPVLIFP. The Cytoplasmic segment spans residues 731–837; the sequence is IIYFVPDEQH…DRIMHFYSAP (107 aa). A disordered region spans residues 744–767; the sequence is AAEREHQKSLNQKSSKVKSHKEKN. A helical transmembrane segment spans residues 838–858; it reads FSKFVGNVVGYLAFIFLYAYV. Topologically, residues 859–877 are extracellular; that stretch reads VLFNFPRFDPAKTLGGIHP. Residues 878–898 traverse the membrane as a helical segment; sequence TEIVLYFWVFTILIEEIRQLA. Residues E893 and Q896 each contribute to the Ca(2+) site. Residues 899 to 916 are Cytoplasmic-facing; the sequence is AKPPKYIKDKVSVYFSDT. Residues 917-937 form a helical membrane-spanning segment; the sequence is WNFVDIFSLTVFIIAIILRFF. Positions 918 and 921 each coordinate Ca(2+). Residues 938 to 947 lie on the Extracellular side of the membrane; sequence TNSRIFTASR. The chain crosses the membrane as a helical span at residues 948-968; the sequence is IILSLDIIFFIVRSLQIFSVN. Residues 969-980 lie on the Cytoplasmic side of the membrane; the sequence is RLLGPKLVMIQK. A helical membrane pass occupies residues 981 to 1001; sequence MMQDLAQFIIILAVFTIAYGI. Residues 1002–1018 lie on the Extracellular side of the membrane; it reads ALHAVMFPSPGIYARNN. A glycan (N-linked (GlcNAc...) asparagine) is linked at N1017. An intramembrane region (pore-forming) is located at residues 1019–1034; the sequence is TWVTITSVVQYPYWQM. The Selectivity filter motif lies at 1035–1037; the sequence is YGE. Topologically, residues 1035–1059 are extracellular; it reads YGELFLDEIQGEKPKEFGEVDPDGR. The Prevents fast channel inactivation motif lies at 1040 to 1042; sequence LDE. The helical transmembrane segment at 1060-1080 threads the bilayer; it reads WLSPLLLAIYMVFTNILLLNL. Residues 1081 to 1116 are Cytoplasmic-facing; that stretch reads LIAIFNYTFERVQEDSDKVWKFQRYDLVQEYHSRPV. Residues 1117 to 1135 lie within the membrane without spanning it; it reads FAPPLVLLGHILIFIRWVW. The Cytoplasmic portion of the chain corresponds to 1136–1551; that stretch reads RMCRCGHPPR…KVAKMRDAAF (416 aa). The stretch at 1184–1209 forms a coiled coil; it reads LEERVRALGDRVDCINSQLNRVLDSM. One can recognise a Nudix hydrolase domain in the interval 1394 to 1546; it reads WKRTSAGVML…VSILEKVAKM (153 aa). The Nudix box signature appears at 1428-1449; sequence GMVEPGQLVTQALKAEFGEEAM.

Belongs to the transient receptor (TC 1.A.4) family. LTrpC subfamily. TRPM2 sub-subfamily. As to quaternary structure, homotetramer.

Its subcellular location is the cell membrane. Activated by phosphatidylinositol 4,5-bisphosphate (PIP2). Although PIP2 is essential for the channel activation, its contribution to the level of channel activity is minimal. Also activated by diphosphate ribose-2'-phosphate. Upon binding to ADPR, channel activation requires only a short initial cytosolic Ca(2+) increase, then the activation is sustained by the uptake of extracellular Ca(2+). Activated by 2-aminoethyl diphenylborinate (2-APB) in a Ca(2+)-dependent manner. 2-APB prevents the inactivation of the channel. Functionally, nonselective, voltage-independent cation channel that mediates Ca(2+) and to a lesser extent Na(+) influx, leading to increased cytoplasmic Ca(2+) levels. Functions as a ligand-gated ion channel. Binding of ADP-ribose causes a conformation change; the channel is primed but still requires Ca(2+) binding to trigger channel opening. May have ADP-ribose pyrophosphatase activity which reduces ADP-ribose levels induced by oxidative stress, thus preventing the channel activation by reactive oxygen species. The protein is Transient receptor potential cation channel subfamily M member-like 2 of Nematostella vectensis (Starlet sea anemone).